The chain runs to 570 residues: Probable electron transfer flavoprotein-ubiquinone oxidoreductase (570 aa).

An FAD-binding site is contributed by 13 to 27; sequence VVIVGAGPAGLSAAI. 4 residues coordinate [4Fe-4S] cluster: Cys-515, Cys-539, Cys-542, and Cys-545. Residues 530 to 559 form the 4Fe-4S ferredoxin-type domain; it reads KRFQINAANCVHCKTCDIKDPSQNITWVTP.

Requires [4Fe-4S] cluster as cofactor. The cofactor is FAD.

The enzyme catalyses a ubiquinone + reduced [electron-transfer flavoprotein] = a ubiquinol + oxidized [electron-transfer flavoprotein] + H(+). In terms of biological role, accepts electrons from ETF and reduces ubiquinone. This is Probable electron transfer flavoprotein-ubiquinone oxidoreductase (etfD) from Acinetobacter baylyi (strain ATCC 33305 / BD413 / ADP1).